Consider the following 87-residue polypeptide: MSAQQFYGDKGYAPAPPQQAYGGPNYYPPQQNYPQQGYAPPQGYPQGGYPAQQPMYVQQPQASDPGGDLCCGLLTGLACCCCLDAMF.

Residues 1–64 form a disordered region; sequence MSAQQFYGDK…MYVQQPQASD (64 aa). Low complexity predominate over residues 18–41; it reads QQAYGGPNYYPPQQNYPQQGYAPP.

Belongs to the CYSTM1 family. In terms of processing, palmitoylated.

It is found in the cell membrane. It localises to the cell tip. Required for the maintenance of viability of cells in stationary phase and in starvation conditions. In Schizosaccharomyces pombe (strain 972 / ATCC 24843) (Fission yeast), this protein is Lipid-anchored plasma membrane protein uvi15 (uvi15).